The sequence spans 328 residues: Delta-aminolevulinic acid dehydratase (328 aa).

Residues C122, C124, and C132 each contribute to the Zn(2+) site. Catalysis depends on K197, which acts as the Schiff-base intermediate with substrate. 5-aminolevulinate contacts are provided by R207 and R219. E235 contributes to the Mg(2+) binding site. Catalysis depends on K250, which acts as the Schiff-base intermediate with substrate. Residues S276 and Y315 each coordinate 5-aminolevulinate.

It belongs to the ALAD family. Homooctamer. It depends on Zn(2+) as a cofactor.

The catalysed reaction is 2 5-aminolevulinate = porphobilinogen + 2 H2O + H(+). It functions in the pathway porphyrin-containing compound metabolism; protoporphyrin-IX biosynthesis; coproporphyrinogen-III from 5-aminolevulinate: step 1/4. Catalyzes an early step in the biosynthesis of tetrapyrroles. Binds two molecules of 5-aminolevulinate per subunit, each at a distinct site, and catalyzes their condensation to form porphobilinogen. The chain is Delta-aminolevulinic acid dehydratase (hemB) from Halalkalibacterium halodurans (strain ATCC BAA-125 / DSM 18197 / FERM 7344 / JCM 9153 / C-125) (Bacillus halodurans).